The chain runs to 149 residues: MAGTEISAITTKLLEAKKAKGITFADLEQLLGRDEVWIAAVIYRQASASVDEAEKLLHCLGLSDDLVPELTAPSVKGLGPVVPTDPLIYRFYEIMQVYGMPMKEVIHEKFGDGIMSAIDFTLDIEKEADPKGDRVKVTMNGKFLPYKKW.

Residues Arg-90, Glu-93, and Ser-116 contribute to the active site.

Belongs to the cyanase family.

It carries out the reaction cyanate + hydrogencarbonate + 3 H(+) = NH4(+) + 2 CO2. Catalyzes the reaction of cyanate with bicarbonate to produce ammonia and carbon dioxide. The sequence is that of Cyanate hydratase from Synechocystis sp. (strain ATCC 27184 / PCC 6803 / Kazusa).